The following is a 392-amino-acid chain: Phosphopentomutase (392 aa).

Mn(2+)-binding residues include aspartate 13, aspartate 286, histidine 291, aspartate 327, histidine 328, and histidine 339.

It belongs to the phosphopentomutase family. Mn(2+) is required as a cofactor.

It is found in the cytoplasm. The enzyme catalyses 2-deoxy-alpha-D-ribose 1-phosphate = 2-deoxy-D-ribose 5-phosphate. It catalyses the reaction alpha-D-ribose 1-phosphate = D-ribose 5-phosphate. It participates in carbohydrate degradation; 2-deoxy-D-ribose 1-phosphate degradation; D-glyceraldehyde 3-phosphate and acetaldehyde from 2-deoxy-alpha-D-ribose 1-phosphate: step 1/2. Isomerase that catalyzes the conversion of deoxy-ribose 1-phosphate (dRib-1-P) and ribose 1-phosphate (Rib-1-P) to deoxy-ribose 5-phosphate (dRib-5-P) and ribose 5-phosphate (Rib-5-P), respectively. The chain is Phosphopentomutase from Oceanobacillus iheyensis (strain DSM 14371 / CIP 107618 / JCM 11309 / KCTC 3954 / HTE831).